A 445-amino-acid polypeptide reads, in one-letter code: ATP-dependent protease ATPase subunit HslU (445 aa).

ATP contacts are provided by residues Ile-17, 59–64, Asp-254, Glu-319, and Arg-391; that span reads GVGKTE.

This sequence belongs to the ClpX chaperone family. HslU subfamily. A double ring-shaped homohexamer of HslV is capped on each side by a ring-shaped HslU homohexamer. The assembly of the HslU/HslV complex is dependent on binding of ATP.

The protein localises to the cytoplasm. Functionally, ATPase subunit of a proteasome-like degradation complex; this subunit has chaperone activity. The binding of ATP and its subsequent hydrolysis by HslU are essential for unfolding of protein substrates subsequently hydrolyzed by HslV. HslU recognizes the N-terminal part of its protein substrates and unfolds these before they are guided to HslV for hydrolysis. This chain is ATP-dependent protease ATPase subunit HslU, found in Pseudomonas savastanoi pv. phaseolicola (strain 1448A / Race 6) (Pseudomonas syringae pv. phaseolicola (strain 1448A / Race 6)).